We begin with the raw amino-acid sequence, 370 residues long: MLDDFKIDLLVKNKPPTSTTAVVAMSGGVDSSVAAALLHKLGYKVIGITLQLYNNNNNSNTKGACCGSLDTQDAKQVASSMGFPHYTLNYEKVFREEVIEDFIDTYTQGKTPIPCIKCNQVIKFRDLLNATKSLGADVLVTGHYIRKIEQDDDIYVYSSKDTKKDQSYFLFATTVEQLRLLRFPLGNFHKEDIRKLAKYFNLQVANKPDSQNICFVTDTYKKTIAELRPHTIKKGNIIDINGNILSQHNGIVNFTIGQRKGIGISSKAPLYVIKLNPDTNEVTVGPKSALLQNKLYIREINWLAKEKIPHNGLNVKVKLRSSHSGSPATIFPNNNNTATILLQDSYCTVTPGQACVIYDHDRMLGGGWIC.

ATP-binding positions include 24-31 and Leu-50; that span reads AMSGGVDS. The active-site Nucleophile is the Cys-118. A disulfide bridge links Cys-118 with Cys-214. Gly-142 is a binding site for ATP. The tract at residues 164 to 166 is interaction with tRNA; it reads KDQ. Cys-214 (cysteine persulfide intermediate) is an active-site residue.

The protein belongs to the MnmA/TRMU family.

The protein localises to the cytoplasm. It carries out the reaction S-sulfanyl-L-cysteinyl-[protein] + uridine(34) in tRNA + AH2 + ATP = 2-thiouridine(34) in tRNA + L-cysteinyl-[protein] + A + AMP + diphosphate + H(+). Its function is as follows. Catalyzes the 2-thiolation of uridine at the wobble position (U34) of tRNA, leading to the formation of s(2)U34. The sequence is that of tRNA-specific 2-thiouridylase MnmA from Ehrlichia ruminantium (strain Welgevonden).